The chain runs to 600 residues: ATP-dependent lipid A-core flippase (600 aa).

4 helical membrane-spanning segments follow: residues 26–46 (VGIF…QPML), 82–102 (LLIV…NYFL), 167–187 (VFLF…MLAI), and 266–286 (PMLQ…VLFL). One can recognise an ABC transmembrane type-1 domain in the interval 30-321 (LLSILGFVIF…LSEVSSTIQK (292 aa)). Residues 353–589 (LEVKNLSFFY…NGYYARLHAM (237 aa)) form the ABC transporter domain. 387 to 394 (GRSGSGKS) provides a ligand contact to ATP.

Belongs to the ABC transporter superfamily. Lipid exporter (TC 3.A.1.106) family. As to quaternary structure, homodimer.

It localises to the cell inner membrane. The catalysed reaction is ATP + H2O + lipid A-core oligosaccharideSide 1 = ADP + phosphate + lipid A-core oligosaccharideSide 2.. Involved in lipopolysaccharide (LPS) biosynthesis. Translocates lipid A-core from the inner to the outer leaflet of the inner membrane. Transmembrane domains (TMD) form a pore in the inner membrane and the ATP-binding domain (NBD) is responsible for energy generation. The polypeptide is ATP-dependent lipid A-core flippase (Pseudomonas syringae pv. tomato (strain ATCC BAA-871 / DC3000)).